Here is a 340-residue protein sequence, read N- to C-terminus: Manganese-dependent ADP-ribose/CDP-alcohol diphosphatase (340 aa).

Position 1 is an N-acetylmethionine (M1). Zn(2+)-binding residues include D25, Q27, D74, N110, H241, H278, and H280.

This sequence belongs to the ADPRibase-Mn family. In terms of assembly, monomer. Mg(2+) is required as a cofactor.

The catalysed reaction is CDP-choline + H2O = phosphocholine + CMP + 2 H(+). It carries out the reaction ADP-D-ribose + H2O = D-ribose 5-phosphate + AMP + 2 H(+). It catalyses the reaction CDP-glycerol + H2O = sn-glycerol 3-phosphate + CMP + 2 H(+). In terms of biological role, hydrolyzes ADP-ribose, IDP-ribose, CDP-glycerol, CDP-choline and CDP-ethanolamine, but not other non-reducing ADP-sugars or CDP-glucose. May be involved in immune cell signaling as suggested by the second-messenger role of ADP-ribose, which activates TRPM2 as a mediator of oxidative/nitrosative stress. The protein is Manganese-dependent ADP-ribose/CDP-alcohol diphosphatase (Adprm) of Mus musculus (Mouse).